A 426-amino-acid polypeptide reads, in one-letter code: Cytochrome c biogenesis protein CcsB (426 aa).

Helical transmembrane passes span 14 to 34 (LKIA…GTLI), 72 to 92 (SFWF…CSFR), and 162 to 182 (LGPI…TYGS).

The protein belongs to the Ccs1/CcsB family. May interact with CcsA.

The protein resides in the cellular thylakoid membrane. Functionally, required during biogenesis of c-type cytochromes (cytochrome c6 and cytochrome f) at the step of heme attachment. This Prochlorococcus marinus (strain NATL1A) protein is Cytochrome c biogenesis protein CcsB.